The sequence spans 174 residues: NADH-quinone oxidoreductase subunit B 2 (174 aa).

[4Fe-4S] cluster contacts are provided by C53, C54, C118, and C148.

It belongs to the complex I 20 kDa subunit family. NDH-1 is composed of 14 different subunits. Subunits NuoB, C, D, E, F, and G constitute the peripheral sector of the complex. The cofactor is [4Fe-4S] cluster.

The protein resides in the cell inner membrane. It catalyses the reaction a quinone + NADH + 5 H(+)(in) = a quinol + NAD(+) + 4 H(+)(out). NDH-1 shuttles electrons from NADH, via FMN and iron-sulfur (Fe-S) centers, to quinones in the respiratory chain. Couples the redox reaction to proton translocation (for every two electrons transferred, four hydrogen ions are translocated across the cytoplasmic membrane), and thus conserves the redox energy in a proton gradient. The polypeptide is NADH-quinone oxidoreductase subunit B 2 (Cereibacter sphaeroides (strain ATCC 17025 / ATH 2.4.3) (Rhodobacter sphaeroides)).